The primary structure comprises 669 residues: Sodium-dependent phosphate transporter (669 aa).

The Extracellular segment spans residues 1 to 6 (MVTGPD). Residues 7 to 27 (MLWLVITSGIACFFMAFVTGA) traverse the membrane as a helical segment. The Cytoplasmic segment spans residues 28–47 (NDIANTFSTSIGSKAISIKK). The chain crosses the membrane as a helical span at residues 48 to 68 (ALIVAFFFEALGASLLGGTVT). Residues 69 to 86 (DSIRSKIINFQVFYDTPE) are Extracellular-facing. A helical transmembrane segment spans residues 87–107 (FLMLGMCCALMGATVWLAVAT). Position 108 (arginine 108) is a topological domain, cytoplasmic. A helical membrane pass occupies residues 109-129 (AGLPVSTTHSIIGALLGFGLA). Residues 130 to 143 (TGNMKSIKWEKINN) are Extracellular-facing. A helical membrane pass occupies residues 144-164 (IVISWLAAPILAGTCSAIAFT). Residues 165–186 (VLRMLILRKKNSFEIIKKMYWF) lie on the Cytoplasmic side of the membrane. A helical membrane pass occupies residues 187–207 (LIFLITLPFSVFLIFHNPIVI). The Extracellular segment spans residues 208–239 (NTQCKMKKDGKVIVSSPCYIEDWSAAHSFYAS). Residues 240–260 (IICILLSSLLTAIGSFVIYII) form a helical membrane-spanning segment. At 261–502 (YNKRINNYNL…YNNGIRGKIK (242 aa)) the chain is on the cytoplasmic side. Residues 311 to 335 (AHNNTSNGTKQNQVGNGTKSNNNNV) are compositionally biased toward polar residues. 2 disordered regions span residues 311–364 (AHNN…SVEA) and 392–444 (TNMN…KNME). Over residues 342–352 (KNVKSQQDDSK) the composition is skewed to basic and acidic residues. Residues 395–433 (NENNNNSNKNNNSNKNNNSNKNNNSNKNNNSNNGNSNEG) show a composition bias toward low complexity. Residues 503–523 (VQWYILLFGGLSMSLGLSIMG) form a helical membrane-spanning segment. At 524-542 (YRVIKTVGMKLIKITPARG) the chain is on the extracellular side. The helical transmembrane segment at 543–563 (FTIELISGLVVLFFSICGIPL) threads the bilayer. Residues 564–632 (SSTHCAVSSV…TSCVNLRLFR (69 aa)) are Cytoplasmic-facing. A helical membrane pass occupies residues 633-653 (TVFLSWILTVVFSATVTAGIY). Over 654-669 (SFAAYSPSYIMKMQTV) the chain is Extracellular.

The protein belongs to the inorganic phosphate transporter (PiT) (TC 2.A.20) family.

It localises to the cell membrane. The enzyme catalyses 2 Na(+)(out) + phosphate(out) = 2 Na(+)(in) + phosphate(in). Sodium-phosphate symporter which preferentially transports the monovalent form of phosphate with a stoichiometry of two sodium ions per phosphate ion. The sequence is that of Sodium-dependent phosphate transporter from Plasmodium falciparum.